Consider the following 94-residue polypeptide: MPGPTVVRFTARVVGRVQGVGFRDYVRTRGRRLGLVGTATNMPDGAVVVIAEGGAPACQNLARLLVTGHTPGWTDRVEVVWQRAQGDLADFRRK.

In terms of domain architecture, Acylphosphatase-like spans Arg-8–Lys-94. Catalysis depends on residues Arg-23 and Asn-41.

Belongs to the acylphosphatase family.

It carries out the reaction an acyl phosphate + H2O = a carboxylate + phosphate + H(+). The chain is Acylphosphatase (acyP) from Frankia alni (strain DSM 45986 / CECT 9034 / ACN14a).